A 212-amino-acid chain; its full sequence is Cyclin-P4-1 (212 aa).

This sequence belongs to the cyclin family. Cyclin U/P subfamily.

The chain is Cyclin-P4-1 (CYCP4-1) from Oryza sativa subsp. japonica (Rice).